The chain runs to 393 residues: Pyrimidine monooxygenase RutA (393 aa).

FMN contacts are provided by residues 79–80 (IK), N145, E154, 170–171 (RY), and S220.

Belongs to the NtaA/SnaA/DszA monooxygenase family. RutA subfamily.

The enzyme catalyses uracil + FMNH2 + NADH + O2 = (Z)-3-ureidoacrylate + FMN + NAD(+) + H2O + H(+). The catalysed reaction is thymine + FMNH2 + NADH + O2 = (Z)-2-methylureidoacrylate + FMN + NAD(+) + H2O + H(+). Functionally, catalyzes the pyrimidine ring opening between N-3 and C-4 by an unusual flavin hydroperoxide-catalyzed mechanism, adding oxygen atoms in the process to yield ureidoacrylate peracid, that immediately reacts with FMN forming ureidoacrylate and FMN-N(5)-oxide. The FMN-N(5)-oxide reacts spontaneously with NADH to produce FMN. Requires the flavin reductase RutF to regenerate FMN in vivo. In Escherichia coli O9:H4 (strain HS), this protein is Pyrimidine monooxygenase RutA.